A 733-amino-acid chain; its full sequence is Hypermethylated in cancer 1 protein (733 aa).

The BTB domain maps to 47–110; that stretch reads CDVIIVVQNA…IYTGRLADGA (64 aa). A mediates HDAC-dependent transcriptional repression region spans residues 154 to 315; sequence KYCHLRGGGG…PFRGGSGSPG (162 aa). Omega-N-methylarginine is present on Arg159. The segment at 189-209 is disordered; it reads YPSPVGPPPPPAAEPPSGPEA. Residues 192–206 show a composition bias toward pro residues; it reads PVGPPPPPAAEPPSG. A Phosphoserine modification is found at Ser237. Residues 241-247 form an interaction with CTBP1 region; the sequence is GLDLSKK. Residues 241–421 are disordered; the sequence is GLDLSKKSPP…PGGHLEGYPC (181 aa). Ser248 bears the Phosphoserine mark. Residues 284-293 show a composition bias toward pro residues; sequence LALPSLPPLP. An N6-acetyllysine; alternate modification is found at Lys333. A Glycyl lysine isopeptide (Lys-Gly) (interchain with G-Cter in SUMO); alternate cross-link involves residue Lys333. Basic and acidic residues predominate over residues 344–361; that stretch reads ELGRERGSPSERCEERGG. Position 366 is a phosphoserine (Ser366). The segment covering 368–380 has biased composition (pro residues); sequence GGPPLGLAPPPRY. 5 C2H2-type zinc fingers span residues 439–459, 509–529, 537–557, 565–585, and 593–613; these read CIPCGKGFPSSEQLNAHVEAH, CASCDKSYKDPATLRQHEKTH, CTICGKKFTQRGTMTRHMRSH, CDACGMRFTRQYRLTEHMRIH, and CQVCGGKFAQQRNLISHMKMH. The residue at position 704 (Ser704) is a Phosphoserine.

Belongs to the krueppel C2H2-type zinc-finger protein family. Hic subfamily. In terms of assembly, self-associates. Interacts with HIC2. Interacts with CTBP1 and CTBP2. Interacts with TCF7L2 and ARID1A. Interacts with MTA1 and MBD3; indicative for an association with the NuRD complex. Interacts with SIRT1. Acetylated on several residues, including Lys-333. Lys-333 is deacetylated by SIRT1. Post-translationally, sumoylated on Lys-333 by a PIAS family member, which enhances interaction with MTA1, positively regulates transcriptional repression activity and is enhanced by HDAC4. In terms of tissue distribution, ubiquitously expressed with highest levels found in lung, colon, prostate, thymus, testis and ovary. Expression is absent or decreased in many tumor cells.

The protein resides in the nucleus. Transcriptional repressor. Recognizes and binds to the consensus sequence '5-[CG]NG[CG]GGGCA[CA]CC-3'. May act as a tumor suppressor. Involved in development of head, face, limbs and ventral body wall. Involved in down-regulation of SIRT1 and thereby is involved in regulation of p53/TP53-dependent apoptotic DNA-damage responses. The specific target gene promoter association seems to be depend on corepressors, such as CTBP1 or CTBP2 and MTA1. In cooperation with MTA1 (indicative for an association with the NuRD complex) represses transcription from CCND1/cyclin-D1 and CDKN1C/p57Kip2 specifically in quiescent cells. Involved in regulation of the Wnt signaling pathway probably by association with TCF7L2 and preventing TCF7L2 and CTNNB1 association with promoters of TCF-responsive genes. Seems to repress transcription from E2F1 and ATOH1 which involves ARID1A, indicative for the participation of a distinct SWI/SNF-type chromatin-remodeling complex. Probably represses transcription of ACKR3, FGFBP1 and EFNA1. This chain is Hypermethylated in cancer 1 protein (HIC1), found in Homo sapiens (Human).